A 1203-amino-acid chain; its full sequence is Delphilin (1203 aa).

In terms of domain architecture, PDZ 1 spans methionine 1 to glycine 79. The S-palmitoyl cysteine moiety is linked to residue alanine 3. Residues glycine 215–arginine 270 form a disordered region. Low complexity predominate over residues leucine 231–proline 241. Residues threonine 268 to proline 345 form the PDZ 2 domain. Phosphoserine is present on serine 303. Disordered regions lie at residues glutamate 466–proline 541, isoleucine 563–threonine 586, leucine 611–arginine 656, and serine 710–serine 821. Polar residues predominate over residues arginine 500–serine 509. Serine 572, serine 613, serine 644, and serine 647 each carry phosphoserine. A compositionally biased stretch (low complexity) spans leucine 611 to leucine 625. A compositionally biased stretch (low complexity) spans glutamate 715–histidine 740. Over residues isoleucine 741–phenylalanine 756 the composition is skewed to pro residues. A compositionally biased stretch (polar residues) spans glutamine 774–asparagine 784. Residues proline 786 to proline 803 show a composition bias toward pro residues. Residues histidine 812–tryptophan 1203 form the FH2 domain.

In terms of assembly, interacts with C-terminus of the glutamate receptor GRID2 via PDZ domain. Isoform 2 also interacts with Profilin-2/PFN2 and with the monocarboxylate transporter SLC16A7 via PDZ domain. The interaction of isoform 2 with GRID2 is dependent on GRID2 phosphorylation by PKA. Post-translationally, isoform 2 is palmitoylated. Palmitoylation of isoform 2 is necessary for the enhanced cell surface expression of GRID2, and is also responsible for the accumulation of isoform 2 within dendritic spines. Isoform 1 and isoform 2 are differentially localized, probably modulating GRID2 signaling in neurons. As to expression, isoform 1 is expressed in the cerebellum, but not in the cerebral cortex. Isoform 2 is expressed in the cell body of purkinge cells of the cerebellum and weakly expressed in the cerebrum and the brainstem as well as various nuclei of the thalamus. Isoform 2 is highly expressed in the cerebral cortex than in the cerebellum. Isoform 3 is expressed in the cerebellum and cerebrum.

Its subcellular location is the postsynaptic cell membrane. It localises to the cell projection. The protein localises to the dendritic spine. It is found in the synapse. The protein resides in the cell membrane. Postsynaptic scaffolding protein at the Purkinje cell synapse, where it may serve to link GRID2 with actin cytoskeleton and various signaling molecules. The chain is Delphilin (Grid2ip) from Mus musculus (Mouse).